A 334-amino-acid polypeptide reads, in one-letter code: MTESDERSLRDLLLESADDLENVLKMIIDTLINREKSVMLKSGESVTNIVRLFDAKQESVRKLLQKVPEFQERESLIRTLKAHVEKRDEVIQQVENNLKACEVALTRSCFHANQKVKKMNEAALRPVNSETLIKLSHQISKHNSVSAPLTWQIGDPSRPFPQEHEFRTGQLLNPKIQSSGPQILLGKSSAQKPIIASPSASSSNGGTAPTRTVGTPLVNSATNGDYSPRTGYGAEETSPIQEQVLLGVTPNEKQWQNPPMPGAATSSQSPLSGAPQSPSSPSVKLKISGIPNRPGDIDQVQEVRDVEQMSSDSSNSSDSSDDEGSSKKTRGRNK.

Positions 76-100 form a coiled coil; it reads LIRTLKAHVEKRDEVIQQVENNLKA. Residues 188–203 are compositionally biased toward low complexity; that stretch reads SSAQKPIIASPSASSS. Disordered stretches follow at residues 188-234 and 252-334; these read SSAQ…GYGA and EKQW…GRNK. Polar residues-rich tracts occupy residues 204–225 and 264–282; these read NGGTAPTRTVGTPLVNSATNGD and ATSSQSPLSGAPQSPSSPS.

Belongs to the Mediator complex subunit 4 family. In terms of assembly, component of the Mediator complex.

It localises to the nucleus. Component of the Mediator complex, a coactivator involved in the regulated transcription of nearly all RNA polymerase II-dependent genes. Mediator functions as a bridge to convey information from gene-specific regulatory proteins to the basal RNA polymerase II transcription machinery. Mediator is recruited to promoters by direct interactions with regulatory proteins and serves as a scaffold for the assembly of a functional preinitiation complex with RNA polymerase II and the general transcription factors. In Caenorhabditis briggsae, this protein is Mediator of RNA polymerase II transcription subunit 4 (mdt-4).